Here is a 287-residue protein sequence, read N- to C-terminus: Putative glutamate--cysteine ligase regulatory subunit (287 aa).

It belongs to the aldo/keto reductase family. Glutamate--cysteine ligase light chain subfamily. Heterodimer of a catalytic heavy chain and a regulatory light chain.

The protein localises to the cytoplasm. The protein operates within sulfur metabolism; glutathione biosynthesis; glutathione from L-cysteine and L-glutamate: step 1/2. The protein is Putative glutamate--cysteine ligase regulatory subunit of Schizosaccharomyces pombe (strain 972 / ATCC 24843) (Fission yeast).